Reading from the N-terminus, the 48-residue chain is Omega-agatoxin-Aa5a (48 aa).

Intrachain disulfides connect Cys3–Cys16, Cys10–Cys21, Cys15–Cys32, and Cys23–Cys30.

The protein belongs to the neurotoxin 02 (plectoxin) family. As to expression, expressed by the venom gland.

The protein localises to the secreted. Functionally, the toxin blocks voltage-gated calcium channels in rat cerebellar granule cells (IC(50)=200 nM). This is Omega-agatoxin-Aa5a from Agelenopsis aperta (North American funnel-web spider).